The following is a 185-amino-acid chain: Threonylcarbamoyl-AMP synthase (185 aa).

Residues 4–185 (SWRVQQAARE…LATGKVVRPS (182 aa)) enclose the YrdC-like domain.

The protein belongs to the SUA5 family. TsaC subfamily.

It is found in the cytoplasm. It carries out the reaction L-threonine + hydrogencarbonate + ATP = L-threonylcarbamoyladenylate + diphosphate + H2O. Functionally, required for the formation of a threonylcarbamoyl group on adenosine at position 37 (t(6)A37) in tRNAs that read codons beginning with adenine. Catalyzes the conversion of L-threonine, HCO(3)(-)/CO(2) and ATP to give threonylcarbamoyl-AMP (TC-AMP) as the acyladenylate intermediate, with the release of diphosphate. The protein is Threonylcarbamoyl-AMP synthase of Pseudomonas fluorescens (strain ATCC BAA-477 / NRRL B-23932 / Pf-5).